A 163-amino-acid chain; its full sequence is 2-C-methyl-D-erythritol 2,4-cyclodiphosphate synthase (163 aa).

A divalent metal cation is bound by residues Asp-11 and His-13. Residues Asp-11 to His-13 and His-37 to Ser-38 each bind 4-CDP-2-C-methyl-D-erythritol 2-phosphate. His-45 lines the a divalent metal cation pocket. Residues Asp-59–Gly-61, Phe-64–Asp-68, Ala-103–Ala-109, and Arg-145 contribute to the 4-CDP-2-C-methyl-D-erythritol 2-phosphate site.

This sequence belongs to the IspF family. Homotrimer. A divalent metal cation is required as a cofactor.

It catalyses the reaction 4-CDP-2-C-methyl-D-erythritol 2-phosphate = 2-C-methyl-D-erythritol 2,4-cyclic diphosphate + CMP. It participates in isoprenoid biosynthesis; isopentenyl diphosphate biosynthesis via DXP pathway; isopentenyl diphosphate from 1-deoxy-D-xylulose 5-phosphate: step 4/6. Involved in the biosynthesis of isopentenyl diphosphate (IPP) and dimethylallyl diphosphate (DMAPP), two major building blocks of isoprenoid compounds. Catalyzes the conversion of 4-diphosphocytidyl-2-C-methyl-D-erythritol 2-phosphate (CDP-ME2P) to 2-C-methyl-D-erythritol 2,4-cyclodiphosphate (ME-CPP) with a corresponding release of cytidine 5-monophosphate (CMP). The sequence is that of 2-C-methyl-D-erythritol 2,4-cyclodiphosphate synthase from Nitrosomonas europaea (strain ATCC 19718 / CIP 103999 / KCTC 2705 / NBRC 14298).